The chain runs to 274 residues: Penicillin-insensitive murein endopeptidase (274 aa).

A signal peptide spans 1–19 (MNKTAIALLALLASSASLA). 3 cysteine pairs are disulfide-bonded: cysteine 44–cysteine 265, cysteine 187–cysteine 235, and cysteine 216–cysteine 223. Histidine 110, histidine 113, aspartate 120, aspartate 147, histidine 150, and histidine 211 together coordinate Zn(2+). Residues 227-274 (PLPPPGDGCGAELQSWFEPPKPGTTKPEKKTPPPLPPSCQALLDEHVI) form a disordered region.

Belongs to the peptidase M74 family. In terms of assembly, dimer. The cofactor is Zn(2+).

The protein resides in the periplasm. Murein endopeptidase that cleaves the D-alanyl-meso-2,6-diamino-pimelyl amide bond that connects peptidoglycan strands. Likely plays a role in the removal of murein from the sacculus. The chain is Penicillin-insensitive murein endopeptidase from Escherichia coli (strain ATCC 8739 / DSM 1576 / NBRC 3972 / NCIMB 8545 / WDCM 00012 / Crooks).